Reading from the N-terminus, the 508-residue chain is Photosystem II CP47 reaction center protein (508 aa).

The next 6 membrane-spanning stretches (helical) occupy residues Ser21–Ser36, Ile101–Trp115, Gly140–Phe156, Ile203–Ser218, Val237–Val252, and Cys457–Arg472.

It belongs to the PsbB/PsbC family. PsbB subfamily. As to quaternary structure, PSII is composed of 1 copy each of membrane proteins PsbA, PsbB, PsbC, PsbD, PsbE, PsbF, PsbH, PsbI, PsbJ, PsbK, PsbL, PsbM, PsbT, PsbX, PsbY, PsbZ, Psb30/Ycf12, at least 3 peripheral proteins of the oxygen-evolving complex and a large number of cofactors. It forms dimeric complexes. Binds multiple chlorophylls. PSII binds additional chlorophylls, carotenoids and specific lipids. serves as cofactor.

It is found in the plastid. The protein resides in the chloroplast thylakoid membrane. In terms of biological role, one of the components of the core complex of photosystem II (PSII). It binds chlorophyll and helps catalyze the primary light-induced photochemical processes of PSII. PSII is a light-driven water:plastoquinone oxidoreductase, using light energy to abstract electrons from H(2)O, generating O(2) and a proton gradient subsequently used for ATP formation. The chain is Photosystem II CP47 reaction center protein from Mesostigma viride (Green alga).